The sequence spans 122 residues: Large ribosomal subunit protein uL18 (122 aa).

A compositionally biased stretch (basic residues) spans 1–20 (MLKKVSKNTNRQGRHQRVRN). Residues 1 to 22 (MLKKVSKNTNRQGRHQRVRNKI) are disordered.

It belongs to the universal ribosomal protein uL18 family. Part of the 50S ribosomal subunit; part of the 5S rRNA/L5/L18/L25 subcomplex. Contacts the 5S and 23S rRNAs.

Functionally, this is one of the proteins that bind and probably mediate the attachment of the 5S RNA into the large ribosomal subunit, where it forms part of the central protuberance. This chain is Large ribosomal subunit protein uL18, found in Alkaliphilus metalliredigens (strain QYMF).